Consider the following 81-residue polypeptide: Pyruvate synthase subunit PorD (81 aa).

The tract at residues 1–20 (MESLGATVKEPGSTRKNKTG) is disordered. 2 consecutive 4Fe-4S ferredoxin-type domains span residues 25–54 (FKPF…KEHE) and 51–80 (KEHE…MERE). Positions 34, 37, 40, 44, 60, 63, 66, and 70 each coordinate [4Fe-4S] cluster.

Heterotetramer of one alpha, one beta, one delta and one gamma chain. [4Fe-4S] cluster is required as a cofactor.

This chain is Pyruvate synthase subunit PorD (porD), found in Methanothermobacter marburgensis (strain ATCC BAA-927 / DSM 2133 / JCM 14651 / NBRC 100331 / OCM 82 / Marburg) (Methanobacterium thermoautotrophicum).